A 427-amino-acid polypeptide reads, in one-letter code: Adenylosuccinate synthetase (427 aa).

Residues 12 to 18 and 40 to 42 each bind GTP; these read GDEGKGK and GHT. Residue Asp13 is the Proton acceptor of the active site. Mg(2+)-binding residues include Asp13 and Gly40. Residues 13–16, 38–41, Thr128, Arg142, Gln223, Thr238, and Arg302 each bind IMP; these read DEGK and NAGH. Catalysis depends on His41, which acts as the Proton donor. A substrate-binding site is contributed by 298-304; the sequence is TVTGRAR. GTP is bound by residues Arg304, 330-332, and 412-414; these read RLD and SVG.

Belongs to the adenylosuccinate synthetase family. Homodimer. The cofactor is Mg(2+).

It is found in the cytoplasm. It carries out the reaction IMP + L-aspartate + GTP = N(6)-(1,2-dicarboxyethyl)-AMP + GDP + phosphate + 2 H(+). Its pathway is purine metabolism; AMP biosynthesis via de novo pathway; AMP from IMP: step 1/2. Its function is as follows. Plays an important role in the de novo pathway of purine nucleotide biosynthesis. Catalyzes the first committed step in the biosynthesis of AMP from IMP. The sequence is that of Adenylosuccinate synthetase from Brachyspira hyodysenteriae (strain ATCC 49526 / WA1).